We begin with the raw amino-acid sequence, 594 residues long: A-type ATP synthase subunit A (594 aa).

236 to 243 (GPFGSGKT) provides a ligand contact to ATP.

This sequence belongs to the ATPase alpha/beta chains family. Has multiple subunits with at least A(3), B(3), C, D, E, F, H, I and proteolipid K(x).

It localises to the cell membrane. The enzyme catalyses ATP + H2O + 4 H(+)(in) = ADP + phosphate + 5 H(+)(out). Its function is as follows. Component of the A-type ATP synthase that produces ATP from ADP in the presence of a proton gradient across the membrane. The A chain is the catalytic subunit. The protein is A-type ATP synthase subunit A of Pyrobaculum neutrophilum (strain DSM 2338 / JCM 9278 / NBRC 100436 / V24Sta) (Thermoproteus neutrophilus).